Reading from the N-terminus, the 344-residue chain is SUMO-activating enzyme subunit 1 (344 aa).

It belongs to the ubiquitin-activating E1 family. Heterodimer of sae1 and uba2/sae2. The heterodimer corresponds to the two domains that are encoded on a single polypeptide chain in ubiquitin-activating enzyme E1. Interacts with ube2i.

The protein localises to the nucleus. Its pathway is protein modification; protein sumoylation. The heterodimer acts as an E1 ligase for sumo1, sumo2, and sumo3. It mediates ATP-dependent activation of sumo proteins followed by formation of a thioester bond between a sumo protein and a conserved active site cysteine residue on uba2/sae2. This Xenopus laevis (African clawed frog) protein is SUMO-activating enzyme subunit 1 (sae1).